A 203-amino-acid chain; its full sequence is Small ribosomal subunit protein uS4c (203 aa).

Residues 91-159 enclose the S4 RNA-binding domain; that stretch reads MRLDNIIFRL…ISKNIEFYQK (69 aa).

This sequence belongs to the universal ribosomal protein uS4 family. In terms of assembly, part of the 30S ribosomal subunit. Contacts protein S5. The interaction surface between S4 and S5 is involved in control of translational fidelity.

The protein localises to the plastid. Its subcellular location is the chloroplast. One of the primary rRNA binding proteins, it binds directly to 16S rRNA where it nucleates assembly of the body of the 30S subunit. Functionally, with S5 and S12 plays an important role in translational accuracy. This Lopidium concinnum (Moss) protein is Small ribosomal subunit protein uS4c (rps4).